The sequence spans 327 residues: Malate dehydrogenase (327 aa).

Residue Gly12–Cys18 coordinates NAD(+). Arg92 and Arg98 together coordinate substrate. NAD(+) contacts are provided by residues Asn105, Gln112, and Thr129–Asn131. Positions 131 and 162 each coordinate substrate. His187 functions as the Proton acceptor in the catalytic mechanism.

It belongs to the LDH/MDH superfamily. MDH type 2 family.

The enzyme catalyses (S)-malate + NAD(+) = oxaloacetate + NADH + H(+). Catalyzes the reversible oxidation of malate to oxaloacetate. This Cutibacterium acnes (strain DSM 16379 / KPA171202) (Propionibacterium acnes) protein is Malate dehydrogenase.